A 762-amino-acid chain; its full sequence is Centrosomal protein of 85 kDa (762 aa).

2 disordered regions span residues 1–26 and 94–119; these read MAMQ…IQKG and VMPS…SKLP. 2 stretches are compositionally biased toward polar residues: residues 14–26 and 98–111; these read HVTS…IQKG and TLGT…STPV. A Phosphoserine modification is found at Ser-17. Phosphoserine is present on residues Ser-126 and Ser-141. Residues 257-433 are mediates interaction with NEK2 and is required for its function in the suppression of centrosome disjunction; it reads GLSKPLPSQV…QLIRESLKVA (177 aa). Coiled coils occupy residues 334-657 and 723-750; these read EHLL…RQAQ and PDVI…MSDR. Positions 434–476 are required for centrosome localization and for its function in the suppression of centrosome disjunction; the sequence is LQKHSEEVKKQEERVKGRDKHINNLKKKCQKESEQNREKQQRI. Composition is skewed to basic and acidic residues over residues 443–455 and 463–474; these read KQEE…DKHI and QKESEQNREKQQ. Disordered stretches follow at residues 443–474 and 541–570; these read KQEE…EKQQ and EAEF…VEME. Ser-623 bears the Phosphoserine mark.

This sequence belongs to the CEP85 family. As to quaternary structure, homodimer. Interacts with STIL (via N-terminus); this interaction is essential for robust PLK4 activation and efficient centriole assembly and for PLK4-dependent cell migration. Interacts with PLK4; required for CEP85 to be able to drive centriole duplication and cell migration.

The protein localises to the cytoplasm. Its subcellular location is the cytoskeleton. The protein resides in the microtubule organizing center. It is found in the centrosome. It localises to the spindle pole. The protein localises to the nucleus. Its subcellular location is the nucleolus. The protein resides in the centriole. It is found in the cell cortex. Acts as a regulator of centriole duplication through a direct interaction with STIL, a key factor involved in the early steps of centriole formation. The CEP85-STIL protein complex acts as a modulator of PLK4-driven cytoskeletal rearrangements and directional cell motility. Acts as a negative regulator of NEK2 to maintain the centrosome integrity in interphase. Suppresses centrosome disjunction by inhibiting NEK2 kinase activity. The protein is Centrosomal protein of 85 kDa of Homo sapiens (Human).